Consider the following 127-residue polypeptide: Large ribosomal subunit protein bL12 (127 aa).

It belongs to the bacterial ribosomal protein bL12 family. As to quaternary structure, homodimer. Part of the ribosomal stalk of the 50S ribosomal subunit. Forms a multimeric L10(L12)X complex, where L10 forms an elongated spine to which 2 to 4 L12 dimers bind in a sequential fashion. Binds GTP-bound translation factors.

Functionally, forms part of the ribosomal stalk which helps the ribosome interact with GTP-bound translation factors. Is thus essential for accurate translation. In Caulobacter vibrioides (strain ATCC 19089 / CIP 103742 / CB 15) (Caulobacter crescentus), this protein is Large ribosomal subunit protein bL12.